Consider the following 211-residue polypeptide: Imidazole glycerol phosphate synthase subunit HisH (211 aa).

The Glutamine amidotransferase type-1 domain maps to 1 to 211; that stretch reads MIGIIDYGMG…ASIIEGKGSM (211 aa). Cysteine 79 serves as the catalytic Nucleophile. Catalysis depends on residues histidine 186 and glutamate 188.

Heterodimer of HisH and HisF.

It is found in the cytoplasm. The catalysed reaction is 5-[(5-phospho-1-deoxy-D-ribulos-1-ylimino)methylamino]-1-(5-phospho-beta-D-ribosyl)imidazole-4-carboxamide + L-glutamine = D-erythro-1-(imidazol-4-yl)glycerol 3-phosphate + 5-amino-1-(5-phospho-beta-D-ribosyl)imidazole-4-carboxamide + L-glutamate + H(+). It catalyses the reaction L-glutamine + H2O = L-glutamate + NH4(+). It participates in amino-acid biosynthesis; L-histidine biosynthesis; L-histidine from 5-phospho-alpha-D-ribose 1-diphosphate: step 5/9. In terms of biological role, IGPS catalyzes the conversion of PRFAR and glutamine to IGP, AICAR and glutamate. The HisH subunit catalyzes the hydrolysis of glutamine to glutamate and ammonia as part of the synthesis of IGP and AICAR. The resulting ammonia molecule is channeled to the active site of HisF. The sequence is that of Imidazole glycerol phosphate synthase subunit HisH from Geobacillus sp. (strain WCH70).